A 23-amino-acid polypeptide reads, in one-letter code: Alyteserin-1d (23 aa).

Asn-23 carries the post-translational modification Asparagine amide.

Expressed by the skin glands.

The protein resides in the secreted. It localises to the target cell membrane. Functionally, antibacterial peptide with amphipathic alpha-helical structure. Shows selective growth inhibitory activity against the Gram-negative bacteria E.coli (MIC=25 uM) Has a weak hemolytic activity against human erythrocytes (LC(50)&gt;100 uM). Is very weakly active against S.aureus (MIC=200 uM). The polypeptide is Alyteserin-1d (Alytes obstetricans (Common midwife toad)).